The following is a 341-amino-acid chain: L-threonine 3-dehydrogenase (341 aa).

Cys-38 contributes to the Zn(2+) binding site. Catalysis depends on charge relay system residues Thr-40 and His-43. The Zn(2+) site is built by His-63, Glu-64, Cys-93, Cys-96, Cys-99, and Cys-107. NAD(+) is bound by residues Ile-175, Asp-195, Arg-200, 262–264 (LGI), and 286–287 (IY).

It belongs to the zinc-containing alcohol dehydrogenase family. In terms of assembly, homotetramer. Zn(2+) is required as a cofactor.

The protein localises to the cytoplasm. The enzyme catalyses L-threonine + NAD(+) = (2S)-2-amino-3-oxobutanoate + NADH + H(+). It functions in the pathway amino-acid degradation; L-threonine degradation via oxydo-reductase pathway; glycine from L-threonine: step 1/2. Its function is as follows. Catalyzes the NAD(+)-dependent oxidation of L-threonine to 2-amino-3-ketobutyrate. This is L-threonine 3-dehydrogenase from Shewanella baltica (strain OS185).